The following is a 285-amino-acid chain: NAD kinase (285 aa).

Asp76 (proton acceptor) is an active-site residue. NAD(+) contacts are provided by residues Asp76–Gly77, Asn151–Glu152, His162, Arg179, Asp181, Thr192–Ser197, and Gln252.

This sequence belongs to the NAD kinase family. A divalent metal cation serves as cofactor.

It is found in the cytoplasm. The catalysed reaction is NAD(+) + ATP = ADP + NADP(+) + H(+). Involved in the regulation of the intracellular balance of NAD and NADP, and is a key enzyme in the biosynthesis of NADP. Catalyzes specifically the phosphorylation on 2'-hydroxyl of the adenosine moiety of NAD to yield NADP. The polypeptide is NAD kinase (Haemophilus influenzae (strain ATCC 51907 / DSM 11121 / KW20 / Rd)).